We begin with the raw amino-acid sequence, 105 residues long: Large ribosomal subunit protein eL36 (105 aa).

The tract at residues 86–105 (QAGKKKRDDIANINRKASAK) is disordered.

This sequence belongs to the eukaryotic ribosomal protein eL36 family.

The chain is Large ribosomal subunit protein eL36 (rpl36) from Dictyostelium discoideum (Social amoeba).